The sequence spans 467 residues: Asparagine--tRNA ligase (467 aa).

Belongs to the class-II aminoacyl-tRNA synthetase family. In terms of assembly, homodimer.

It localises to the cytoplasm. The catalysed reaction is tRNA(Asn) + L-asparagine + ATP = L-asparaginyl-tRNA(Asn) + AMP + diphosphate + H(+). The chain is Asparagine--tRNA ligase from Bacteroides fragilis (strain ATCC 25285 / DSM 2151 / CCUG 4856 / JCM 11019 / LMG 10263 / NCTC 9343 / Onslow / VPI 2553 / EN-2).